The sequence spans 723 residues: Threonine--tRNA ligase 1, cytoplasmic (723 aa).

Residues 1–10 (MSEEQASSPS) show a composition bias toward polar residues. The disordered stretch occupies residues 1 to 49 (MSEEQASSPSAKMGDEEKPVGAGEEKQKEGSKKKNKEGSGDGGRAELNP). Residues 13 to 39 (MGDEEKPVGAGEEKQKEGSKKKNKEGS) are compositionally biased toward basic and acidic residues. Ser-39 is subject to Phosphoserine. One can recognise a TGS domain in the interval 79–143 (DSKPIKVTLP…EEDCTLELLK (65 aa)). Lys-243 is modified (N6-acetyllysine). Phosphothreonine is present on Thr-246. Phosphotyrosine is present on Tyr-298. Thr-453 is modified (phosphothreonine). Phosphoserine is present on Ser-702.

This sequence belongs to the class-II aminoacyl-tRNA synthetase family. Homodimer. In terms of processing, ISGylated.

The protein localises to the cytoplasm. It carries out the reaction tRNA(Thr) + L-threonine + ATP = L-threonyl-tRNA(Thr) + AMP + diphosphate + H(+). In terms of biological role, catalyzes the attachment of threonine to tRNA(Thr) in a two-step reaction: threonine is first activated by ATP to form Thr-AMP and then transferred to the acceptor end of tRNA(Thr). Also edits incorrectly charged tRNA(Thr) via its editing domain, at the post-transfer stage. In Bos taurus (Bovine), this protein is Threonine--tRNA ligase 1, cytoplasmic (TARS1).